The following is a 493-amino-acid chain: Ketol-acid reductoisomerase (NADP(+)) (493 aa).

Residues 14 to 208 (LDQLGRCRFM…GGDRAGVLES (195 aa)) enclose the KARI N-terminal Rossmann domain. NADP(+) contacts are provided by residues 45–48 (CGAQ), Arg68, Arg76, Ser78, and 108–110 (DKQ). His132 is an active-site residue. Gly158 provides a ligand contact to NADP(+). 2 consecutive KARI C-terminal knotted domains span residues 209–345 (SFVA…APKA) and 346–486 (DGIK…MTDM). Mg(2+) contacts are provided by Asp217, Glu221, Glu390, and Glu394. Substrate is bound at residue Ser415.

It belongs to the ketol-acid reductoisomerase family. It depends on Mg(2+) as a cofactor.

The catalysed reaction is (2R)-2,3-dihydroxy-3-methylbutanoate + NADP(+) = (2S)-2-acetolactate + NADPH + H(+). The enzyme catalyses (2R,3R)-2,3-dihydroxy-3-methylpentanoate + NADP(+) = (S)-2-ethyl-2-hydroxy-3-oxobutanoate + NADPH + H(+). Its pathway is amino-acid biosynthesis; L-isoleucine biosynthesis; L-isoleucine from 2-oxobutanoate: step 2/4. It functions in the pathway amino-acid biosynthesis; L-valine biosynthesis; L-valine from pyruvate: step 2/4. In terms of biological role, involved in the biosynthesis of branched-chain amino acids (BCAA). Catalyzes an alkyl-migration followed by a ketol-acid reduction of (S)-2-acetolactate (S2AL) to yield (R)-2,3-dihydroxy-isovalerate. In the isomerase reaction, S2AL is rearranged via a Mg-dependent methyl migration to produce 3-hydroxy-3-methyl-2-ketobutyrate (HMKB). In the reductase reaction, this 2-ketoacid undergoes a metal-dependent reduction by NADPH to yield (R)-2,3-dihydroxy-isovalerate. This is Ketol-acid reductoisomerase (NADP(+)) from Mannheimia succiniciproducens (strain KCTC 0769BP / MBEL55E).